A 273-amino-acid chain; its full sequence is MTIAAAGTRPQRAEGRGHLAAKLFDGRTRIRELYQEGAAKIRLPDTFDASMEAVIINTAGGLTGGDRMDWSVDAGPGTRIDVTTQACEKIYKASAGIAEVATSIKVGAQARVDWLPQETILFDRAALFRRLDVDLDESAEFLAVEAVLLGRKAMGEAVVSGLFRDRWRIRRSGQLIHAEELRLSEGVAALAARQAVLGGQVAFATLLYAGPLLEAYLSKVRPLVEGSMGGASAWNGKLVVRLAAADGFSLRKILIPVISALRNGAPVPKVWNL.

The protein belongs to the UreD family. In terms of assembly, ureD, UreF and UreG form a complex that acts as a GTP-hydrolysis-dependent molecular chaperone, activating the urease apoprotein by helping to assemble the nickel containing metallocenter of UreC. The UreE protein probably delivers the nickel.

The protein resides in the cytoplasm. In terms of biological role, required for maturation of urease via the functional incorporation of the urease nickel metallocenter. This is Urease accessory protein UreD from Rhizobium johnstonii (strain DSM 114642 / LMG 32736 / 3841) (Rhizobium leguminosarum bv. viciae).